Consider the following 810-residue polypeptide: Volume-regulated anion channel subunit LRRC8A (810 aa).

Met1 carries the post-translational modification N-acetylmethionine. Residues 1 to 23 (MIPVTELRYFADTQPAYRILKPW) lie on the Cytoplasmic side of the membrane. Residues 24 to 47 (WDVFTDYISIVMLMIAVFGGTLQV) traverse the membrane as a helical segment. The Extracellular portion of the chain corresponds to 48–123 (TQDKMICLPC…YENRLHWFAK (76 aa)). Intrachain disulfides connect Cys54/Cys310, Cys57/Cys65, and Cys113/Cys295. Residues Asn66 and Asn83 are each glycosylated (N-linked (GlcNAc...) asparagine). A helical transmembrane segment spans residues 124–142 (YFPYLVLLHTLIFLACSNF). Topologically, residues 143 to 264 (WFKFPRTSSK…EEGDIVYRLY (122 aa)) are cytoplasmic. Thr200 carries the phosphothreonine modification. The residue at position 202 (Ser202) is a Phosphoserine. Thr215 bears the Phosphothreonine mark. The residue at position 217 (Ser217) is a Phosphoserine. A helical transmembrane segment spans residues 265–286 (MRQTIIKVIKFILIICYTVYYV). Residues 287–316 (HNIKFDVDCTVDIESLTGYRTYRCAHPLAT) lie on the Extracellular side of the membrane. Residues 317–341 (LFKILASFYISLVIFYGLICMYTLW) form a helical membrane-spanning segment. Over 342–810 (WMLRRSLKKY…RLWRADKEQA (469 aa)) the chain is Cytoplasmic. LRR repeat units lie at residues 399-422 (ENKL…RLTK), 423-445 (NAQD…VFDL), 447-468 (ELEV…IAQL), 469-492 (TGLK…AFLR), 493-515 (ENLR…IYSL), 518-542 (LEEL…GLRE), 543-565 (LKRL…VTDV), 567-589 (VHLQ…SLKK), 590-613 (MANL…IFSL), 615-637 (NLQE…SFQH), 639-661 (HRLT…IGNL), 662-684 (TNLE…LFYC), 686-707 (KLRY…IGLL), 708-730 (QNLQ…LFQC), 732-753 (KLRA…VGEL), 754-776 (TNLT…LGEC), and 778-801 (LLKR…VKER). The Di-leucine motif motif lies at 706–707 (LL).

The protein belongs to the LRRC8 family. In terms of assembly, heterohexamer; oligomerizes with other LRRC8 proteins (LRRC8B, LRRC8C, LRRC8D and/or LRRC8E) to form a heterohexamer. Can form homohexamers in vitro, but these have lower conductance than heterohexamers. In vivo, the subunit composition may depend primarily on expression levels, and heterooligomeric channels containing various proportions of the different LRRC8 proteins may coexist. Interact with GRB2. Interacts with NOX4; this interaction prevents the ubiquitin-mediated degradation of LRRC8A. N-glycosylated. As to expression, expressed in brain, kidney, ovary, lung, liver, heart, and fetal brain and liver. Found at high levels in bone marrow; lower levels are detected in peripheral blood cells. Expressed on T-cells as well as on B-lineage cells.

It localises to the cell membrane. It is found in the lysosome membrane. The enzyme catalyses chloride(in) = chloride(out). The catalysed reaction is iodide(out) = iodide(in). It carries out the reaction taurine(out) = taurine(in). It catalyses the reaction L-aspartate(out) = L-aspartate(in). The enzyme catalyses L-glutamate(out) = L-glutamate(in). The catalysed reaction is myo-inositol(out) = myo-inositol(in). It carries out the reaction 2',3'-cGAMP(out) = 2',3'-cGAMP(in). With respect to regulation, inhibited by (4-[(2-butyl-6,7-dichloro-2-cyclopentyl-2,3-dihydro-1-oxo-1H-inden-5-yl)oxy]butanoic acid), which plugs the channel like a cork in a bottle by binding in the extracellular selectivity filter and sterically occluding ion conduction. Lipids may block conduction in closed heterohexameric channels. Its function is as follows. Essential component of the volume-regulated anion channel (VRAC, also named VSOAC channel), an anion channel required to maintain a constant cell volume in response to extracellular or intracellular osmotic changes. The VRAC channel conducts iodide better than chloride and can also conduct organic osmolytes like taurine. Mediates efflux of amino acids, such as aspartate and glutamate, in response to osmotic stress. LRRC8A and LRRC8D are required for the uptake of the drug cisplatin. In complex with LRRC8C or LRRC8E, acts as a transporter of immunoreactive cyclic dinucleotide GMP-AMP (2'-3'-cGAMP), an immune messenger produced in response to DNA virus in the cytosol: mediates both import and export of 2'-3'-cGAMP, thereby promoting transfer of 2'-3'-cGAMP to bystander cells. In contrast, complexes containing LRRC8D inhibit transport of 2'-3'-cGAMP. Required for in vivo channel activity, together with at least one other family member (LRRC8B, LRRC8C, LRRC8D or LRRC8E); channel characteristics depend on the precise subunit composition. Can form functional channels by itself (in vitro). Involved in B-cell development: required for the pro-B cell to pre-B cell transition. Also required for T-cell development. Required for myoblast differentiation: VRAC activity promotes membrane hyperpolarization and regulates insulin-stimulated glucose metabolism and oxygen consumption. Also acts as a regulator of glucose-sensing in pancreatic beta cells: VRAC currents, generated in response to hypotonicity- or glucose-induced beta cell swelling, depolarize cells, thereby causing electrical excitation, leading to increase glucose sensitivity and insulin secretion. Also plays a role in lysosome homeostasis by forming functional lysosomal VRAC channels in response to low cytoplasmic ionic strength condition: lysosomal VRAC channels are necessary for the formation of large lysosome-derived vacuoles, which store and then expel excess water to maintain cytosolic water homeostasis. Acts as a key factor in NLRP3 inflammasome activation by modulating itaconate efflux and mitochondria function. The protein is Volume-regulated anion channel subunit LRRC8A of Homo sapiens (Human).